A 323-amino-acid polypeptide reads, in one-letter code: Aquaporin-4 (323 aa).

Topologically, residues Met-1–Lys-36 are cytoplasmic. 2 S-palmitoyl cysteine lipidation sites follow: Cys-13 and Cys-17. The chain crosses the membrane as a helical span at residues Ala-37 to Ile-57. Topologically, residues Asn-58 to Asp-69 are extracellular. The helical transmembrane segment at Met-70–Gly-89 threads the bilayer. Over His-90–Gly-93 the chain is Cytoplasmic. Positions Gly-94–Thr-101 form an intramembrane region, discontinuously helical. Positions Asn-97–Ala-99 match the NPA 1 motif. At Val-102–Ser-115 the chain is on the cytoplasmic side. Ser-111 carries the phosphoserine; by PKG modification. A helical membrane pass occupies residues Val-116 to Val-136. The Extracellular portion of the chain corresponds to Thr-137–Thr-155. A glycan (N-linked (GlcNAc...) asparagine) is linked at Asn-153. A helical membrane pass occupies residues Ala-156 to Ala-176. The Cytoplasmic portion of the chain corresponds to Ser-177–Asp-184. Ser-180 carries the post-translational modification Phosphoserine; by PKC. The helical transmembrane segment at Val-185–Ile-205 threads the bilayer. The Extracellular segment spans residues Asn-206 to Thr-208. The segment at residues Gly-209–Val-222 is an intramembrane region (discontinuously helical). The short motif at Asn-213–Ala-215 is the NPA 2 element. The Extracellular portion of the chain corresponds to Ile-223–Trp-231. The chain crosses the membrane as a helical span at residues Ile-232 to Phe-252. Topologically, residues Cys-253–Val-323 are cytoplasmic. Residues Ser-276 and Ser-285 each carry the phosphoserine modification. Thr-289 is subject to Phosphothreonine. Ser-321 carries the post-translational modification Phosphoserine.

This sequence belongs to the MIP/aquaporin (TC 1.A.8) family. In terms of assembly, homotetramer. The tetramers can form oligomeric arrays in membranes. The size of the oligomers differs between tissues and is smaller in skeletal muscle than in brain. Interaction between AQP4 oligomeric arrays in close-by cells can contribute to cell-cell adhesion. Part of a complex containing MLC1, TRPV4, HEPACAM and ATP1B1. Phosphorylation by PKC at Ser-180 promotes internalization from the cell membrane, reducing the conductance by 50%. Phosphorylation by PKG at Ser-111 in response to glutamate increases conductance by 40%. In terms of processing, isoform Long: Palmitoylated on its N-terminal region. Isoform 3: Not palmitoylated. Detected in cerebellum. Detected on pericapillary astrocyte endfeet in cerebellum, and in skeletal muscle. Detected in glial lamellae in the hypothalamus (at protein level). Abundant in mature brain cortex, cerebellum and spinal cord. Highly expressed in the ependymal cell lining the aqueductal system and over the space of the brain in contact with the subarachnoid space. Detected in paraventricular and supraoptic nuclei, the granule cell layer of the dentate gyrus and the Purkinje cell layer in the cerebellum. Only weakly detectable in eye, kidney, intestine, and lung.

The protein resides in the cell membrane. It localises to the basolateral cell membrane. The protein localises to the endosome membrane. Its subcellular location is the sarcolemma. It is found in the cell projection. It catalyses the reaction H2O(in) = H2O(out). Forms a water-specific channel. Plays an important role in brain water homeostasis and in glymphatic solute transport. Required for a normal rate of water exchange across the blood brain interface. Required for normal levels of cerebrospinal fluid influx into the brain cortex and parenchyma along paravascular spaces that surround penetrating arteries, and for normal drainage of interstitial fluid along paravenous drainage pathways. Thereby, it is required for normal clearance of solutes from the brain interstitial fluid, including soluble beta-amyloid peptides derived from APP. Plays a redundant role in urinary water homeostasis and urinary concentrating ability. The protein is Aquaporin-4 (Aqp4) of Rattus norvegicus (Rat).